A 349-amino-acid polypeptide reads, in one-letter code: tRNA pseudouridine synthase D (349 aa).

Substrate is bound at residue Phe-27. Residue Asp-80 is the Nucleophile of the active site. Asn-129 lines the substrate pocket. In terms of domain architecture, TRUD spans 155–303 (GVPNYFGAQR…VEASRRAMLL (149 aa)). Phe-329 lines the substrate pocket.

This sequence belongs to the pseudouridine synthase TruD family.

It catalyses the reaction uridine(13) in tRNA = pseudouridine(13) in tRNA. Functionally, responsible for synthesis of pseudouridine from uracil-13 in transfer RNAs. This Salmonella typhi protein is tRNA pseudouridine synthase D.